Here is a 105-residue protein sequence, read N- to C-terminus: ATP-dependent Clp protease adapter protein ClpS (105 aa).

The interval 1–27 (MVVMSAPTEPKSRPGTTGQRESAPEDV) is disordered.

The protein belongs to the ClpS family. Binds to the N-terminal domain of the chaperone ClpA.

In terms of biological role, involved in the modulation of the specificity of the ClpAP-mediated ATP-dependent protein degradation. This chain is ATP-dependent Clp protease adapter protein ClpS, found in Mycolicibacterium paratuberculosis (strain ATCC BAA-968 / K-10) (Mycobacterium paratuberculosis).